The following is a 376-amino-acid chain: MYKLLKKSGKARRGEFTTPHGVIQTPVFMNVGTLAAIKGAVSSMDLKEIGCQVELSNTYHLHLRPGDEVVKKMGGLHKFMNWDRPILTDSGGFQVFSLSKIRKIQEEGVYFNSHIDGRKIFMGPEESMRIQSNLASTIAMAFDECVENPAPREYVEKSVERTTRWLHRCKDEMNRLNSLPDTINNKQMLFGINQGGTYEDIRIEHAKTIAKMDLDGYAIGGLAVGESHEDMYRIIDAVVPHLPEDKPIYLMGVGIPSNILEAVDRGVDFFDCVLPARNGRHAHVFTKEGKINLLNAKFELDDRPIDEGCQCPACKHYTRSYIRHLFKAKEMLAMRLCVLHNLYFYNNLMEEIRDAIDGNYFKEYKERKLKEWGGRA.

The active-site Proton acceptor is the D89. Residues 89–93 (DSGGF), D143, Q194, and G221 contribute to the substrate site. The segment at 252 to 258 (GVGIPSN) is RNA binding. Catalysis depends on D271, which acts as the Nucleophile. Residues 276–280 (ARNGR) form an RNA binding; important for wobble base 34 recognition region. The Zn(2+) site is built by C309, C311, C314, and H340.

This sequence belongs to the queuine tRNA-ribosyltransferase family. As to quaternary structure, homodimer. Within each dimer, one monomer is responsible for RNA recognition and catalysis, while the other monomer binds to the replacement base PreQ1. Zn(2+) serves as cofactor.

The catalysed reaction is 7-aminomethyl-7-carbaguanine + guanosine(34) in tRNA = 7-aminomethyl-7-carbaguanosine(34) in tRNA + guanine. The protein operates within tRNA modification; tRNA-queuosine biosynthesis. Its function is as follows. Catalyzes the base-exchange of a guanine (G) residue with the queuine precursor 7-aminomethyl-7-deazaguanine (PreQ1) at position 34 (anticodon wobble position) in tRNAs with GU(N) anticodons (tRNA-Asp, -Asn, -His and -Tyr). Catalysis occurs through a double-displacement mechanism. The nucleophile active site attacks the C1' of nucleotide 34 to detach the guanine base from the RNA, forming a covalent enzyme-RNA intermediate. The proton acceptor active site deprotonates the incoming PreQ1, allowing a nucleophilic attack on the C1' of the ribose to form the product. After dissociation, two additional enzymatic reactions on the tRNA convert PreQ1 to queuine (Q), resulting in the hypermodified nucleoside queuosine (7-(((4,5-cis-dihydroxy-2-cyclopenten-1-yl)amino)methyl)-7-deazaguanosine). The polypeptide is Queuine tRNA-ribosyltransferase (Clostridium botulinum (strain Hall / ATCC 3502 / NCTC 13319 / Type A)).